The chain runs to 422 residues: Phospho-N-acetylmuramoyl-pentapeptide-transferase (422 aa).

The next 9 helical transmembrane spans lie at 28-48 (LMAIILALLISSIWGDKFINL), 71-91 (VGVPSMGGVIIIVAILIPCLL), 95-115 (LHNIYMILMLITTVWLGSLGF), 136-156 (IIGQVGLGLIVGLTLYLSPDV), 211-231 (AGWILFVIITIFVVTAVSNGA), 246-266 (AIIGLTLGILAYVSSHIEFAG), 279-299 (LVIFICAFIGALIGFLWYNAY), 313-333 (IGGIIAVFAIIIHKELLIPIL), and 399-419 (KITVRFWIVTIVLAAITIITL).

The protein belongs to the glycosyltransferase 4 family. MraY subfamily. Requires Mg(2+) as cofactor.

The protein resides in the cell inner membrane. It carries out the reaction UDP-N-acetyl-alpha-D-muramoyl-L-alanyl-gamma-D-glutamyl-meso-2,6-diaminopimeloyl-D-alanyl-D-alanine + di-trans,octa-cis-undecaprenyl phosphate = di-trans,octa-cis-undecaprenyl diphospho-N-acetyl-alpha-D-muramoyl-L-alanyl-D-glutamyl-meso-2,6-diaminopimeloyl-D-alanyl-D-alanine + UMP. The protein operates within cell wall biogenesis; peptidoglycan biosynthesis. In terms of biological role, catalyzes the initial step of the lipid cycle reactions in the biosynthesis of the cell wall peptidoglycan: transfers peptidoglycan precursor phospho-MurNAc-pentapeptide from UDP-MurNAc-pentapeptide onto the lipid carrier undecaprenyl phosphate, yielding undecaprenyl-pyrophosphoryl-MurNAc-pentapeptide, known as lipid I. In Bacteroides fragilis (strain ATCC 25285 / DSM 2151 / CCUG 4856 / JCM 11019 / LMG 10263 / NCTC 9343 / Onslow / VPI 2553 / EN-2), this protein is Phospho-N-acetylmuramoyl-pentapeptide-transferase.